The chain runs to 116 residues: Iron-sulfur cluster insertion protein ErpA (116 aa).

3 residues coordinate iron-sulfur cluster: Cys-44, Cys-108, and Cys-110.

The protein belongs to the HesB/IscA family. As to quaternary structure, homodimer. The cofactor is iron-sulfur cluster.

Functionally, required for insertion of 4Fe-4S clusters for at least IspG. The polypeptide is Iron-sulfur cluster insertion protein ErpA (Pseudomonas putida (strain ATCC 47054 / DSM 6125 / CFBP 8728 / NCIMB 11950 / KT2440)).